A 251-amino-acid chain; its full sequence is DNA repair protein RecO (251 aa).

Belongs to the RecO family.

In terms of biological role, involved in DNA repair and RecF pathway recombination. This is DNA repair protein RecO from Acetivibrio thermocellus (strain ATCC 27405 / DSM 1237 / JCM 9322 / NBRC 103400 / NCIMB 10682 / NRRL B-4536 / VPI 7372) (Clostridium thermocellum).